A 524-amino-acid polypeptide reads, in one-letter code: Tissue-resident T-cell transcription regulator protein ZNF683 (524 aa).

Over residues 130–142 (NKDKLGKQPERAG) the composition is skewed to basic and acidic residues. 2 disordered regions span residues 130-166 (NKDK…NRKS) and 265-303 (QALP…LSSQ). 2 consecutive C2H2-type zinc fingers follow at residues 322–344 (YECN…LRVH) and 350–372 (FQCA…HLVH). Residues 398–420 (REREVCHKRFSSSSNLKTHLRLH) form a C2H2-type 3; degenerate zinc finger. The C2H2-type 4 zinc-finger motif lies at 426 to 448 (FQCSVCRSRFTQHIHLKLHHRLH).

Belongs to the krueppel C2H2-type zinc-finger protein family. As to expression, expressed in terminally differentiated effector CD8(+) T-cells, but not in naive and central memory cells. Expressed in terminally differentiated natural killer (NK) cells and natural killer (NKT) T-cells (at protein level). Expressed strongly in effector-type CD8(+) T-cells and weakly in naive and memory CD8(+) T-cells. Expressed in terminally differentiated natural killer (NK) cells. Isoform 2 is strongly expressed in effector CD8(+) T and natural killer (NK) cells. Isoform 1 is expressed in effector CD8(+) T and natural killer (NK) cells. In terms of tissue distribution, (Microbial infection) Expressed in cytomegalovirus (CMV)-infected effector CD8(+) T-cells (at protein level).

The protein resides in the nucleus. Functionally, transcription factor that mediates a transcriptional program in various innate and adaptive immune tissue-resident lymphocyte T-cell types such as tissue-resident memory T (Trm), natural killer (trNK) and natural killer T (NKT) cells and negatively regulates gene expression of proteins that promote the egress of tissue-resident T-cell populations from non-lymphoid organs. Plays a role in the development, retention and long-term establishment of adaptive and innate tissue-resident lymphocyte T cell types in non-lymphoid organs, such as the skin and gut, but also in other nonbarrier tissues like liver and kidney, and therefore may provide immediate immunological protection against reactivating infections or viral reinfection. Also plays a role in the differentiation of both thymic and peripheral NKT cells. Negatively regulates the accumulation of interferon-gamma (IFN-gamma) in NKT cells at steady state or after antigenic stimulation. Positively regulates granzyme B production in NKT cells after innate stimulation. Associates with the transcriptional repressor PRDM1/BLIMP1 to chromatin at gene promoter regions. Lacks transcriptional repressor activity. Binds to DNA within promoter regions of the transcriptional repressor PRDM1/BLIMP1 target sites. Unable to regulate interferon-gamma (IFN-gamma) production in cytomegalovirus (CMV)-infected effector CD8(+) T-cells. Its function is as follows. Transcriptional repressor that binds to DNA within promoter regions of the transcriptional repressor PRDM1/BLIMP1 target sites. Regulates interferon-gamma (IFN-gamma) production in cytomegalovirus (CMV)-infected effector CD8(+) T cells. In Homo sapiens (Human), this protein is Tissue-resident T-cell transcription regulator protein ZNF683.